The chain runs to 348 residues: Fe-S cluster assembly protein DRE2 (348 aa).

The tract at residues 1 to 158 (MSQYKTGLLL…LPTFKKASSS (158 aa)) is N-terminal SAM-like domain. The tract at residues 137–170 (KTNNTKLQSGSKLPTFKKASSSTSNLPSFKKADH) is disordered. Polar residues predominate over residues 144–163 (QSGSKLPTFKKASSSTSNLP). Positions 159 to 242 (TSNLPSFKKA…EEELIDEDGS (84 aa)) are linker. Serine 206 is subject to Phosphoserine. Cysteine 252, cysteine 263, cysteine 266, and cysteine 268 together coordinate [2Fe-2S] cluster. Positions 252 to 268 (CGKSKTKKKKACKDCTC) are fe-S binding site A. The [4Fe-4S] cluster site is built by cysteine 311, cysteine 314, cysteine 322, and cysteine 325. 2 consecutive short sequence motifs (cx2C motif) follow at residues 311 to 314 (CGSC) and 322 to 325 (CSGC). A fe-S binding site B region spans residues 311-325 (CGSCSLGDAFRCSGC).

This sequence belongs to the anamorsin family. In terms of assembly, monomer. Interacts with TAH18. Interacts with MIA40. Requires [2Fe-2S] cluster as cofactor. [4Fe-4S] cluster is required as a cofactor. Ubiquitinated.

The protein resides in the cytoplasm. Its subcellular location is the mitochondrion intermembrane space. Component of the cytosolic iron-sulfur (Fe-S) protein assembly (CIA) machinery required for the maturation of extramitochondrial Fe-S proteins. Part of an electron transfer chain functioning in an early step of cytosolic Fe-S biogenesis, facilitating the de novo assembly of a [4Fe-4S] cluster on the scaffold complex CFD1-NBP35. Electrons are transferred to DRE2 from NADPH via the FAD- and FMN-containing protein TAH18. TAH18-DRE2 are also required for the assembly of the diferric tyrosyl radical cofactor of ribonucleotide reductase (RNR), probably by providing electrons for reduction during radical cofactor maturation in the catalytic small subunit RNR2. Has anti-apoptotic effects in the cell. Involved in negative control of H(2)O(2)-induced cell death. This chain is Fe-S cluster assembly protein DRE2, found in Saccharomyces cerevisiae (strain ATCC 204508 / S288c) (Baker's yeast).